The chain runs to 378 residues: Sphingosine 1-phosphate receptor 3 (378 aa).

At 1 to 44 (MATTHAQGHQPVLGNDTLREHYDYVGKLAGRLRDPPEGGTLITT) the chain is on the extracellular side. The N-linked (GlcNAc...) asparagine glycan is linked to Asn15. A helical membrane pass occupies residues 45 to 65 (ILFLVTCSFIVLENLMVLIAI). Residues 66–74 (WKNNKFHNR) are Cytoplasmic-facing. A helical transmembrane segment spans residues 75–95 (MYFFIGNLALCDLLAGIAYKV). Topologically, residues 96–115 (NILMSGRKTFSLSPTVWFLR) are extracellular. Residues 116 to 136 (EGSMFVALGASTCSLLAIAIE) form a helical membrane-spanning segment. Over 137-154 (RHLTMIKMRPYDANKKHR) the chain is Cytoplasmic. A helical membrane pass occupies residues 155–175 (VFLLIGMCWLIAFSLGALPIL). At 176–196 (GWNCLENFPDCSTILPLYSKK) the chain is on the extracellular side. Residues 197–217 (YIAFLISIFTAILVTIVILYA) traverse the membrane as a helical segment. At 218–244 (RIYCLVKSSSRRVANHNSERSMALLRT) the chain is on the cytoplasmic side. The chain crosses the membrane as a helical span at residues 245–265 (VVIVVSVFIACWSPLFILFLI). Residues 266–281 (DVACRAKECSILFKSQ) lie on the Extracellular side of the membrane. Residues 282–302 (WFIMLAVLNSAMNPVIYTLAS) form a helical membrane-spanning segment. At 303 to 378 (KEMRRAFFRL…RSFQNGVLCK (76 aa)) the chain is on the cytoplasmic side. The segment at 323–354 (TQASPMQPALDPSRSKSSSSNNSSHSPKVKED) is disordered. Ser326 is subject to Phosphoserine. A compositionally biased stretch (low complexity) spans 337-348 (SKSSSSNNSSHS).

The protein belongs to the G-protein coupled receptor 1 family. In terms of tissue distribution, most abundant in heart, lung, kidney and spleen; low but detectable in brain, thymus, muscle and testis; and nearly undetectable in liver, stomach, and intestine. Expressed in embryonic lung from embryonic day 14-18. Also abundantly detected in embryonic nasal cartilage, sphenoid bone, vena cava, Meckel's cartilage/incisor teeth, genital tubercle and bladder.

Its subcellular location is the cell membrane. In terms of biological role, receptor for the lysosphingolipid sphingosine 1-phosphate (S1P). S1P is a bioactive lysophospholipid that elicits diverse physiological effect on most types of cells and tissues. The sequence is that of Sphingosine 1-phosphate receptor 3 (S1pr3) from Mus musculus (Mouse).